An 86-amino-acid polypeptide reads, in one-letter code: uncharacterized protein (86 aa).

A signal peptide spans Met-1–Ala-25.

This is an uncharacterized protein from Bacillus subtilis (strain 168).